The primary structure comprises 270 residues: MAADSSLEFLKSVKGVILDMCGVLYDSGEGGGRAIHGSVEAVKRLMDSGLMLRFCTNETQNTRERFVQKLRVMGFDISVSHVFSPAPAVVQILQKRHLRPHLLVHDDLIPEFDGVDTSSPNCVVIGDAAEKFSYQNLNEAFRVLIGLEKPVLFSLGRGRYYKETDGLKLDVGVYMKALEYACDVQAEVVGKPSSEFFKTVLNDMNLQPHEVVMVGDDLVNDVGGAQSCGMKGLQVRTGKYRPSDECDPSVRADAYVDDLSAAVDAILTNR.

Mg(2+) contacts are provided by Asp-19 and Cys-21. Substrate is bound by residues 19-21 (DMC), 56-57 (TN), and Lys-191. Asp-216 lines the Mg(2+) pocket.

It belongs to the HAD-like hydrolase superfamily. Mg(2+) is required as a cofactor.

Its subcellular location is the cytoplasm. It localises to the nucleus. The catalysed reaction is diphosphate + H2O = 2 phosphate + H(+). In terms of biological role, phosphatase that hydrolyzes imidodiphosphate, 3-phosphohistidine and 6-phospholysine. Has broad substrate specificity and can also hydrolyze inorganic diphosphate, but with lower efficiency. The sequence is that of Phospholysine phosphohistidine inorganic pyrophosphate phosphatase (lhpp) from Danio rerio (Zebrafish).